Consider the following 168-residue polypeptide: uncharacterized protein (168 aa).

A helical transmembrane segment spans residues 24–44; that stretch reads FIGIVLFLAVLIIGILILILF. 2 disordered regions span residues 69–92 and 142–168; these read SPSS…NNSN and NNNN…TKNI. Low complexity predominate over residues 142–157; sequence NNNNNNNNNPPTNISN.

The protein resides in the membrane. This is an uncharacterized protein from Dictyostelium discoideum (Social amoeba).